The following is a 1035-amino-acid chain: Sulfite reductase [NADPH] flavoprotein component (1035 aa).

In terms of domain architecture, FAD-binding FR-type spans 648–879; that stretch reads VKNFVVKVKE…VKPSVMKLPP (232 aa). FAD is bound by residues 684–695 and 814–824; these read YDIGEALGIHAR and LKRREYSIASS.

The cofactor is FAD. FMN serves as cofactor.

It carries out the reaction hydrogen sulfide + 3 NADP(+) + 3 H2O = sulfite + 3 NADPH + 4 H(+). It functions in the pathway sulfur metabolism; hydrogen sulfide biosynthesis; hydrogen sulfide from sulfite (NADPH route): step 1/1. This enzyme catalyzes the 6-electron reduction of sulfite to sulfide. This is one of several activities required for the biosynthesis of L-cysteine from sulfate. The polypeptide is Sulfite reductase [NADPH] flavoprotein component (MET10) (Saccharomyces cerevisiae (strain ATCC 204508 / S288c) (Baker's yeast)).